The following is a 274-amino-acid chain: Acetyl-coenzyme A carboxylase carboxyl transferase subunit alpha (274 aa).

The 245-residue stretch at 1–245 folds into the CoA carboxyltransferase C-terminal domain; it reads MENSQELTPW…RENLKKAIEG (245 aa).

Belongs to the AccA family. As to quaternary structure, acetyl-CoA carboxylase is a heterohexamer composed of biotin carboxyl carrier protein (AccB), biotin carboxylase (AccC) and two subunits each of ACCase subunit alpha (AccA) and ACCase subunit beta (AccD).

It is found in the cytoplasm. The catalysed reaction is N(6)-carboxybiotinyl-L-lysyl-[protein] + acetyl-CoA = N(6)-biotinyl-L-lysyl-[protein] + malonyl-CoA. The protein operates within lipid metabolism; malonyl-CoA biosynthesis; malonyl-CoA from acetyl-CoA: step 1/1. Component of the acetyl coenzyme A carboxylase (ACC) complex. First, biotin carboxylase catalyzes the carboxylation of biotin on its carrier protein (BCCP) and then the CO(2) group is transferred by the carboxyltransferase to acetyl-CoA to form malonyl-CoA. This is Acetyl-coenzyme A carboxylase carboxyl transferase subunit alpha from Clostridium acetobutylicum (strain ATCC 824 / DSM 792 / JCM 1419 / IAM 19013 / LMG 5710 / NBRC 13948 / NRRL B-527 / VKM B-1787 / 2291 / W).